Consider the following 572-residue polypeptide: Urease subunit alpha (572 aa).

In terms of domain architecture, Urease spans 136-572 (GGIDTHIHWI…VPLAQRYFLF (437 aa)). H141, H143, and K224 together coordinate Ni(2+). Position 224 is an N6-carboxylysine (K224). H226 serves as a coordination point for substrate. The Ni(2+) site is built by H253 and H279. H327 (proton donor) is an active-site residue. D367 serves as a coordination point for Ni(2+).

Belongs to the metallo-dependent hydrolases superfamily. Urease alpha subunit family. Heterotrimer of UreA (gamma), UreB (beta) and UreC (alpha) subunits. Three heterotrimers associate to form the active enzyme. The cofactor is Ni cation. Carboxylation allows a single lysine to coordinate two nickel ions.

Its subcellular location is the cytoplasm. It carries out the reaction urea + 2 H2O + H(+) = hydrogencarbonate + 2 NH4(+). The protein operates within nitrogen metabolism; urea degradation; CO(2) and NH(3) from urea (urease route): step 1/1. In Actinobacillus pleuropneumoniae serotype 7 (strain AP76), this protein is Urease subunit alpha.